The sequence spans 827 residues: Glycerol-3-phosphate acyltransferase (827 aa).

Residues cysteine 325–methionine 330 carry the HXXXXD motif motif.

Belongs to the GPAT/DAPAT family.

It is found in the cell inner membrane. It catalyses the reaction sn-glycerol 3-phosphate + an acyl-CoA = a 1-acyl-sn-glycero-3-phosphate + CoA. The protein operates within phospholipid metabolism; CDP-diacylglycerol biosynthesis; CDP-diacylglycerol from sn-glycerol 3-phosphate: step 1/3. This is Glycerol-3-phosphate acyltransferase from Escherichia coli (strain SMS-3-5 / SECEC).